The sequence spans 59 residues: Small ribosomal subunit protein bS21 (59 aa).

The interval 39-59 (ETPVEKYKRKQRLKNRTKRRR) is disordered. Over residues 45–59 (YKRKQRLKNRTKRRR) the composition is skewed to basic residues.

Belongs to the bacterial ribosomal protein bS21 family.

The chain is Small ribosomal subunit protein bS21 from Prochlorococcus marinus (strain SARG / CCMP1375 / SS120).